The following is a 409-amino-acid chain: Argininosuccinate synthase (409 aa).

ATP is bound by residues 11–19 (AYSGGLDTS) and alanine 38. L-citrulline-binding residues include tyrosine 91 and serine 96. Glycine 121 is a binding site for ATP. The L-aspartate site is built by threonine 123, asparagine 127, and aspartate 128. Asparagine 127 lines the L-citrulline pocket. L-citrulline is bound by residues arginine 131, serine 182, serine 191, glutamate 267, and tyrosine 279.

Belongs to the argininosuccinate synthase family. Type 1 subfamily. Homotetramer.

It is found in the cytoplasm. It catalyses the reaction L-citrulline + L-aspartate + ATP = 2-(N(omega)-L-arginino)succinate + AMP + diphosphate + H(+). It participates in amino-acid biosynthesis; L-arginine biosynthesis; L-arginine from L-ornithine and carbamoyl phosphate: step 2/3. This Nitrobacter hamburgensis (strain DSM 10229 / NCIMB 13809 / X14) protein is Argininosuccinate synthase.